Consider the following 303-residue polypeptide: Golgi to ER traffic protein 2 (303 aa).

Topologically, residues Met1–Leu168 are cytoplasmic. The interval Arg19–Asp86 is disordered. The span at Arg31 to Pro48 shows a compositional bias: polar residues. Residues Trp169–Tyr189 traverse the membrane as a helical segment. Topologically, residues Leu190–Ser216 are lumenal. Residues Phe217–Thr236 traverse the membrane as a helical segment. Residues Ser237–Glu280 lie on the Cytoplasmic side of the membrane. A helical transmembrane segment spans residues Val281–Ile301. Residues Tyr302–Asn303 are Lumenal-facing.

This sequence belongs to the GET2 family. Component of the Golgi to ER traffic (GET) complex, which is composed of GET1, GET2 and GET3. Within the complex, GET1 and GET2 form a heterotetramer which is stabilized by phosphatidylinositol binding and which binds to the GET3 homodimer.

It is found in the endoplasmic reticulum membrane. It localises to the golgi apparatus membrane. Required for the post-translational delivery of tail-anchored (TA) proteins to the endoplasmic reticulum. Together with GET1, acts as a membrane receptor for soluble GET3, which recognizes and selectively binds the transmembrane domain of TA proteins in the cytosol. The GET complex cooperates with the HDEL receptor ERD2 to mediate the ATP-dependent retrieval of resident ER proteins that contain a C-terminal H-D-E-L retention signal from the Golgi to the ER. This Debaryomyces hansenii (strain ATCC 36239 / CBS 767 / BCRC 21394 / JCM 1990 / NBRC 0083 / IGC 2968) (Yeast) protein is Golgi to ER traffic protein 2.